We begin with the raw amino-acid sequence, 192 residues long: dTTP/UTP pyrophosphatase (192 aa).

Asp75 (proton acceptor) is an active-site residue.

The protein belongs to the Maf family. YhdE subfamily. It depends on a divalent metal cation as a cofactor.

The protein localises to the cytoplasm. The enzyme catalyses dTTP + H2O = dTMP + diphosphate + H(+). It carries out the reaction UTP + H2O = UMP + diphosphate + H(+). Nucleoside triphosphate pyrophosphatase that hydrolyzes dTTP and UTP. May have a dual role in cell division arrest and in preventing the incorporation of modified nucleotides into cellular nucleic acids. The sequence is that of dTTP/UTP pyrophosphatase from Pelodictyon phaeoclathratiforme (strain DSM 5477 / BU-1).